The chain runs to 197 residues: Adenylyl-sulfate kinase (197 aa).

Residue Gly-31 to Ser-38 participates in ATP binding. Residue Ser-105 is the Phosphoserine intermediate of the active site.

Belongs to the APS kinase family.

It carries out the reaction adenosine 5'-phosphosulfate + ATP = 3'-phosphoadenylyl sulfate + ADP + H(+). The protein operates within sulfur metabolism; hydrogen sulfide biosynthesis; sulfite from sulfate: step 2/3. In terms of biological role, catalyzes the synthesis of activated sulfate. The polypeptide is Adenylyl-sulfate kinase (Aeromonas hydrophila subsp. hydrophila (strain ATCC 7966 / DSM 30187 / BCRC 13018 / CCUG 14551 / JCM 1027 / KCTC 2358 / NCIMB 9240 / NCTC 8049)).